Consider the following 629-residue polypeptide: ATP-dependent DNA helicase II subunit 2 (629 aa).

Positions 254 to 476 (SGLNRKTAVE…GHQIDELMEQ (223 aa)) constitute a Ku domain. Basic and acidic residues predominate over residues 608–620 (DLETLLKRGEQHS). Residues 608-629 (DLETLLKRGEQHSRGSPNNSNN) are disordered.

It belongs to the ku80 family. As to quaternary structure, heterodimer of YKU70/HDF1 and YKU80/HDF2. Interacts with SIR4.

The protein resides in the nucleus. The protein localises to the chromosome. It localises to the telomere. The enzyme catalyses ATP + H2O = ADP + phosphate + H(+). Functionally, single-stranded DNA-dependent ATP-dependent helicase. Involved in non-homologous end joining (NHEJ) DNA double strand break repair. DNA-binding is sequence-independent but has a high affinity to nicks in double-stranded DNA and to the ends of duplex DNA. Binds to naturally occurring chromosomal ends, and therefore provides chromosomal end protection. Appears to have a role in recruitment of telomerase and CDC13 to the telomere and the subsequent telomere elongation. Required also for telomere recombination to repair telomeric ends in the absence of telomerase. KU70, of the KU70/KU80 heterodimer, binds to the stem loop of TLC1, the RNA component of telomerase. Involved in telomere maintenance. Interacts with telomeric repeats and subtelomeric sequences thereby controlling telomere length and protecting against subtelomeric rearrangement. Maintains telomeric chromatin, which is involved in silencing the expression of genes located at the telomere. Required for mating-type switching. The chain is ATP-dependent DNA helicase II subunit 2 (YKU80) from Saccharomyces cerevisiae (strain ATCC 204508 / S288c) (Baker's yeast).